A 956-amino-acid chain; its full sequence is Translation initiation factor IF-2 (956 aa).

3 disordered regions span residues 53-102 (QFAG…QQEI), 116-315 (GKID…NRPA), and 334-371 (TLEKLQGKGGKSKAAKYRRDKRETHRQKSDDEQRALDE). Residues 58-102 (KGNKEASKEVGEEKRKEKEALRVEREKEIEDKRRQEEERQKQQEI) show a composition bias toward basic and acidic residues. A compositionally biased stretch (polar residues) spans 142–158 (VTPTQTEKPVQKETVQS). Basic and acidic residues predominate over residues 166-186 (SEEKKVEKPIITEKKEVKAES). The segment covering 197–208 (TDPTTAEETITT) has biased composition (low complexity). A compositionally biased stretch (polar residues) spans 209-229 (QYQKLSGTTLTGQTIDLSQFN). The span at 240-257 (ITPNKPGTPGVGNNNNAN) shows a compositional bias: low complexity. Residues 343–352 (GKSKAAKYRR) are compositionally biased toward basic residues. Residues 353-371 (DKRETHRQKSDDEQRALDE) are compositionally biased toward basic and acidic residues. In terms of domain architecture, tr-type G spans 454–622 (TRAPIVTVMG…KVLLEAEILD (169 aa)). The tract at residues 463–470 (GHVDHGKT) is G1. Residue 463-470 (GHVDHGKT) coordinates GTP. The segment at 488 to 492 (GITQH) is G2. A G3 region spans residues 510–513 (DTPG). GTP is bound by residues 510–514 (DTPGH) and 564–567 (NKVD). Residues 564–567 (NKVD) form a G4 region. The tract at residues 600–602 (SAK) is G5.

Belongs to the TRAFAC class translation factor GTPase superfamily. Classic translation factor GTPase family. IF-2 subfamily.

It localises to the cytoplasm. In terms of biological role, one of the essential components for the initiation of protein synthesis. Protects formylmethionyl-tRNA from spontaneous hydrolysis and promotes its binding to the 30S ribosomal subunits. Also involved in the hydrolysis of GTP during the formation of the 70S ribosomal complex. This chain is Translation initiation factor IF-2, found in Flavobacterium johnsoniae (strain ATCC 17061 / DSM 2064 / JCM 8514 / BCRC 14874 / CCUG 350202 / NBRC 14942 / NCIMB 11054 / UW101) (Cytophaga johnsonae).